A 342-amino-acid chain; its full sequence is Global transcription regulator FGP1 (342 aa).

Residues 91 to 113 (FSPGEKKRASKKPKKQAGVAKAY) form a disordered region.

The protein belongs to the MIT1/WOR1 family.

The protein localises to the nucleus. Functionally, global transcriptional regulator of pathogenicity. Regulates many genes during growth in putrescine medium and during infection. Involved in the developmental processes of conidium formation and sexual reproduction and modulates a morphological change that accompanies mycotoxin production. This chain is Global transcription regulator FGP1, found in Gibberella zeae (strain ATCC MYA-4620 / CBS 123657 / FGSC 9075 / NRRL 31084 / PH-1) (Wheat head blight fungus).